We begin with the raw amino-acid sequence, 1081 residues long: Dyslexia-associated protein KIAA0319 homolog (1081 aa).

An N-terminal signal peptide occupies residues 1-22; sequence MVSPPGVLSSLLLLAAMAGGSS. An MANSC domain is found at 23 to 99; the sequence is QQCSEGRTYS…PRTTGPIRSY (77 aa). Over 23 to 964 the chain is Extracellular; that stretch reads QQCSEGRTYS…WDGESNCEWS (942 aa). A disordered region spans residues 168–331; that stretch reads LQPSNQQDPR…VLTGLTPPPW (164 aa). N-linked (GlcNAc...) asparagine glycosylation occurs at Asn196. Composition is skewed to polar residues over residues 197-206 and 222-234; these read ATATGDNSAA and EQLQ…TWSP. Asn228 carries an N-linked (GlcNAc...) asparagine glycan. Positions 236–255 are enriched in low complexity; that stretch reads PGHSSISSVWPSSASPLPTE. N-linked (GlcNAc...) asparagine glycans are attached at residues Asn272 and Asn302. 2 stretches are compositionally biased toward polar residues: residues 283–307 and 314–324; these read HNPS…TVTP and TPTFPTSTVLT. PKD domains lie at 345-436, 444-533, 539-629, 630-723, and 729-820; these read AVSA…VMPA, VAVV…IRDA, VANA…VQAE, NNQA…VKKE, and RAQA…VLPD. N-linked (GlcNAc...) asparagine glycosylation is found at Asn430, Asn507, Asn522, Asn545, and Asn560. N-linked (GlcNAc...) asparagine glycosylation occurs at Asn742. The helical transmembrane segment at 965–985 threads the bilayer; sequence VFYVAALALTLTLLTGAVSWL. Residues 986–1081 are Cytoplasmic-facing; the sequence is CICCCRRRKR…VSFGYYSKDR (96 aa). The Endocytosis signal motif lies at 1004-1007; sequence YTIL. At Ser1009 the chain carries Phosphoserine.

In terms of assembly, homodimer. Interacts with AP2M1; required for clathrin-mediated endocytosis. N-glycosylated. Post-translationally, O-glycosylated. In terms of processing, shedding of the extracellular domain and intramembrane cleavage produce several proteolytic products. The intramembrane cleavage releases a soluble cytoplasmic polypeptide that translocates to the nucleolus.

The protein localises to the cell membrane. The protein resides in the early endosome membrane. Functionally, involved in neuronal migration during development of the cerebral neocortex. May function in a cell autonomous and a non-cell autonomous manner and play a role in appropriate adhesion between migrating neurons and radial glial fibers. May also regulate growth and differentiation of dendrites. This is Dyslexia-associated protein KIAA0319 homolog (Kiaa0319) from Mus musculus (Mouse).